A 366-amino-acid chain; its full sequence is Peroxisomal (S)-2-hydroxy-acid oxidase GLO4 (366 aa).

The 360-residue stretch at 1–360 (MEDNLPVNVR…TRSHVMTEGD (360 aa)) folds into the FMN hydroxy acid dehydrogenase domain. Residue Tyr-27 coordinates a 2-oxocarboxylate. FMN-binding positions include 80-82 (PTG), Ser-109, 130-132 (QLY), and Thr-158. Tyr-132 contacts a 2-oxocarboxylate. An a 2-oxocarboxylate-binding site is contributed by Arg-167. Lys-231 and Ser-253 together coordinate FMN. The active-site Proton acceptor is the His-255. Residue Arg-258 coordinates a 2-oxocarboxylate. FMN-binding positions include 286 to 290 (DGGIR) and 309 to 310 (XX). The Microbody targeting signal signature appears at 364-366 (SLL).

This sequence belongs to the FMN-dependent alpha-hydroxy acid dehydrogenase family. In terms of assembly, homotetramer. FMN serves as cofactor.

It is found in the peroxisome. The enzyme catalyses a (2S)-2-hydroxycarboxylate + O2 = a 2-oxocarboxylate + H2O2. It participates in lipid metabolism; fatty acid metabolism. Oxidase that catalyzes the oxidation of a broad range of 2-hydroxyacids to the corresponding 2-oxoacids, with a reduction of O2 to H2O2. May be involved in a general medium- and long-chain fatty acid catabolic pathway such as alpha-oxidation. This is Peroxisomal (S)-2-hydroxy-acid oxidase GLO4 (GLO4) from Oryza sativa subsp. indica (Rice).